The following is a 339-amino-acid chain: Glycerol-3-phosphate dehydrogenase [NAD(P)+] (339 aa).

NADPH is bound by residues S15, Y16, H36, and K110. 3 residues coordinate sn-glycerol 3-phosphate: K110, G139, and T141. A143 contacts NADPH. Residues K195, D248, S258, R259, and N260 each contribute to the sn-glycerol 3-phosphate site. Residue K195 is the Proton acceptor of the active site. R259 lines the NADPH pocket. Residues V283 and E285 each contribute to the NADPH site.

The protein belongs to the NAD-dependent glycerol-3-phosphate dehydrogenase family.

It is found in the cytoplasm. The catalysed reaction is sn-glycerol 3-phosphate + NAD(+) = dihydroxyacetone phosphate + NADH + H(+). The enzyme catalyses sn-glycerol 3-phosphate + NADP(+) = dihydroxyacetone phosphate + NADPH + H(+). The protein operates within membrane lipid metabolism; glycerophospholipid metabolism. Its function is as follows. Catalyzes the reduction of the glycolytic intermediate dihydroxyacetone phosphate (DHAP) to sn-glycerol 3-phosphate (G3P), the key precursor for phospholipid synthesis. The protein is Glycerol-3-phosphate dehydrogenase [NAD(P)+] of Erwinia tasmaniensis (strain DSM 17950 / CFBP 7177 / CIP 109463 / NCPPB 4357 / Et1/99).